The chain runs to 338 residues: Heat-inducible transcription repressor HrcA (338 aa).

It belongs to the HrcA family.

Negative regulator of class I heat shock genes (grpE-dnaK-dnaJ and groELS operons). Prevents heat-shock induction of these operons. This is Heat-inducible transcription repressor HrcA from Bacillus thuringiensis (strain Al Hakam).